Here is a 395-residue protein sequence, read N- to C-terminus: NKAP-like protein (395 aa).

Disordered regions lie at residues Met-1 to Pro-77 and Cys-91 to Lys-247. Ser-23 and Ser-25 each carry phosphoserine. The segment covering Ser-25–Ser-35 has biased composition (polar residues). Over residues Asp-109–Gly-130 the composition is skewed to basic and acidic residues. Phosphoserine is present on Ser-149. The segment covering Asp-150–Asn-161 has biased composition (basic and acidic residues). 2 stretches are compositionally biased toward basic residues: residues Lys-177–Lys-197 and Lys-214–Lys-238.

Belongs to the NKAP family. In terms of assembly, interacts with RBPJ, CIR1 and HDAC3. In terms of tissue distribution, specific to testis (at protein level). Detected in differenting spermatogonia and early spermatocytes (at protein level).

It localises to the nucleus. Its function is as follows. Transcriptional repressor of Notch-mediated signaling. Required for spermatogenesis. The polypeptide is NKAP-like protein (Mus musculus (Mouse)).